Reading from the N-terminus, the 485-residue chain is Glutamyl-tRNA(Gln) amidotransferase subunit A (485 aa).

Catalysis depends on charge relay system residues Lys-79 and Ser-154. Ser-178 serves as the catalytic Acyl-ester intermediate.

It belongs to the amidase family. GatA subfamily. Heterotrimer of A, B and C subunits.

It catalyses the reaction L-glutamyl-tRNA(Gln) + L-glutamine + ATP + H2O = L-glutaminyl-tRNA(Gln) + L-glutamate + ADP + phosphate + H(+). In terms of biological role, allows the formation of correctly charged Gln-tRNA(Gln) through the transamidation of misacylated Glu-tRNA(Gln) in organisms which lack glutaminyl-tRNA synthetase. The reaction takes place in the presence of glutamine and ATP through an activated gamma-phospho-Glu-tRNA(Gln). The polypeptide is Glutamyl-tRNA(Gln) amidotransferase subunit A (Bacillus velezensis (strain DSM 23117 / BGSC 10A6 / LMG 26770 / FZB42) (Bacillus amyloliquefaciens subsp. plantarum)).